The primary structure comprises 125 residues: Large ribosomal subunit protein bL12 (125 aa).

Belongs to the bacterial ribosomal protein bL12 family. Homodimer. Part of the ribosomal stalk of the 50S ribosomal subunit. Forms a multimeric L10(L12)X complex, where L10 forms an elongated spine to which 2 to 4 L12 dimers bind in a sequential fashion. Binds GTP-bound translation factors.

Forms part of the ribosomal stalk which helps the ribosome interact with GTP-bound translation factors. Is thus essential for accurate translation. In Azoarcus sp. (strain BH72), this protein is Large ribosomal subunit protein bL12.